The sequence spans 223 residues: Endonuclease NucS (223 aa).

This sequence belongs to the NucS endonuclease family.

Its subcellular location is the cytoplasm. In terms of biological role, cleaves both 3' and 5' ssDNA extremities of branched DNA structures. The sequence is that of Endonuclease NucS from Streptomyces coelicolor (strain ATCC BAA-471 / A3(2) / M145).